Here is a 108-residue protein sequence, read N- to C-terminus: Nitrite reductase (NADH) small subunit (108 aa).

As to quaternary structure, associates with NirB.

The protein localises to the cytoplasm. The catalysed reaction is NH4(+) + 3 NAD(+) + 2 H2O = nitrite + 3 NADH + 5 H(+). Functionally, required for activity of the reductase. The protein is Nitrite reductase (NADH) small subunit (nirD) of Salmonella typhi.